The following is a 314-amino-acid chain: DNA topoisomerase 1B (314 aa).

Residues 77-314 (VQNRNAKRDR…VDHVKSSTDG (238 aa)) form the Topo IB-type catalytic domain. Residue Tyr274 is the O-(3'-phospho-DNA)-tyrosine intermediate of the active site.

Belongs to the type IB topoisomerase family.

The catalysed reaction is ATP-independent breakage of single-stranded DNA, followed by passage and rejoining.. In terms of biological role, releases the supercoiling and torsional tension of DNA introduced during the DNA replication and transcription by transiently cleaving and rejoining one strand of the DNA duplex. Introduces a single-strand break via transesterification at the specific target site 5'-[CT]CCTTp site in duplex DNA. The scissile phosphodiester is attacked by the catalytic tyrosine of the enzyme, resulting in the formation of a DNA-(3'-phosphotyrosyl)-enzyme intermediate and the expulsion of a 5'-OH DNA strand. The free DNA strand then undergoes passage around the unbroken strand thus removing DNA supercoils. Finally, in the religation step, the DNA 5'-OH attacks the covalent intermediate to expel the active-site tyrosine and restore the DNA phosphodiester backbone. In Vaccinia virus (strain Ankara) (VACV), this protein is DNA topoisomerase 1B (TOP1).